Here is a 514-residue protein sequence, read N- to C-terminus: Glutamate--cysteine ligase, chloroplastic (514 aa).

Residues 1–55 constitute a chloroplast transit peptide; sequence MALLSQAGGAYTVPSGHVSSRTGTKTVSGCVNVLRMKETYVSSYSRTLSTKSMLK. 2 cysteine pairs are disulfide-bonded: Cys178/Cys398 and Cys341/Cys356.

Belongs to the carboxylate-amine ligase family. Glutamate--cysteine ligase type 2 subfamily. As to quaternary structure, homodimer or monomer when oxidized or reduced, respectively. Post-translationally, the Cys-178-Cys-398 disulfide bridge is known to modulate the enzyme activity according to the redox status. The oxidized form constitutes the active enzyme.

It is found in the plastid. Its subcellular location is the chloroplast. The enzyme catalyses L-cysteine + L-glutamate + ATP = gamma-L-glutamyl-L-cysteine + ADP + phosphate + H(+). The protein operates within sulfur metabolism; glutathione biosynthesis; glutathione from L-cysteine and L-glutamate: step 1/2. Its function is as follows. Participates in the detoxification process. The chain is Glutamate--cysteine ligase, chloroplastic (GSH1) from Brassica juncea (Indian mustard).